The following is a 784-amino-acid chain: ATP-dependent 6-phosphofructokinase, platelet type (784 aa).

Met-1 is modified (N-acetylmethionine). Residues Met-1–Ile-398 are N-terminal catalytic PFK domain 1. Phosphoserine occurs at positions 2, 6, and 20. ATP-binding positions include Gly-33, Arg-96–Cys-97, and Gly-126–Ser-129. A Mg(2+)-binding site is contributed by Asp-127. Ser-141 carries the post-translational modification Phosphoserine. Residues Ser-172–Asp-174, Arg-209, Met-216–Arg-218, Glu-272, Arg-300, and His-306–Arg-309 contribute to the substrate site. Asp-174 acts as the Proton acceptor in catalysis. The residue at position 394 (Lys-394) is an N6-acetyllysine. The interdomain linker stretch occupies residues Lys-399–Cys-410. The C-terminal regulatory PFK domain 2 stretch occupies residues Asn-411–Leu-784. Arg-480 contributes to the beta-D-fructose 2,6-bisphosphate binding site. An N6-acetyllysine modification is found at Lys-485. Beta-D-fructose 2,6-bisphosphate-binding positions include Thr-537 to Asn-541, Arg-575, Met-582 to Gly-584, and Glu-638. Ser-539 carries an O-linked (GlcNAc) serine glycan. Tyr-650 is subject to Phosphotyrosine. Residues Arg-664 and His-670 to Gln-673 contribute to the beta-D-fructose 2,6-bisphosphate site. The residue at position 687 (Lys-687) is an N6-acetyllysine. Position 743 (Arg-743) interacts with beta-D-fructose 2,6-bisphosphate.

Belongs to the phosphofructokinase type A (PFKA) family. ATP-dependent PFK group I subfamily. Eukaryotic two domain clade 'E' sub-subfamily. As to quaternary structure, homo- and heterotetramers. Phosphofructokinase (PFK) enzyme functions as a tetramer composed of different combinations of 3 types of subunits, called PFKM (M), PFKL (L) and PFKP (P). The composition of the PFK tetramer differs according to the tissue type it is present in. The kinetic and regulatory properties of the tetrameric enzyme are dependent on the subunit composition, hence can vary across tissues. Interacts with ATG4B; promoting phosphorylation of ATG4B. Requires Mg(2+) as cofactor. GlcNAcylation decreases enzyme activity. In terms of tissue distribution, expression is constant during tumor growth and markedly decreases when cell proliferation stops.

It is found in the cytoplasm. It carries out the reaction beta-D-fructose 6-phosphate + ATP = beta-D-fructose 1,6-bisphosphate + ADP + H(+). It participates in carbohydrate degradation; glycolysis; D-glyceraldehyde 3-phosphate and glycerone phosphate from D-glucose: step 3/4. With respect to regulation, allosterically activated by ADP, AMP, or fructose 2,6-bisphosphate, and allosterically inhibited by ATP or citrate. Its function is as follows. Catalyzes the phosphorylation of D-fructose 6-phosphate to fructose 1,6-bisphosphate by ATP, the first committing step of glycolysis. The polypeptide is ATP-dependent 6-phosphofructokinase, platelet type (Pfkp) (Mus musculus (Mouse)).